The sequence spans 417 residues: NADH-quinone oxidoreductase subunit D (417 aa).

The protein belongs to the complex I 49 kDa subunit family. As to quaternary structure, NDH-1 is composed of 14 different subunits. Subunits NuoB, C, D, E, F, and G constitute the peripheral sector of the complex.

The protein localises to the cell membrane. The enzyme catalyses a quinone + NADH + 5 H(+)(in) = a quinol + NAD(+) + 4 H(+)(out). Functionally, NDH-1 shuttles electrons from NADH, via FMN and iron-sulfur (Fe-S) centers, to quinones in the respiratory chain. The immediate electron acceptor for the enzyme in this species is believed to be ubiquinone. Couples the redox reaction to proton translocation (for every two electrons transferred, four hydrogen ions are translocated across the cytoplasmic membrane), and thus conserves the redox energy in a proton gradient. The protein is NADH-quinone oxidoreductase subunit D of Polynucleobacter asymbioticus (strain DSM 18221 / CIP 109841 / QLW-P1DMWA-1) (Polynucleobacter necessarius subsp. asymbioticus).